The primary structure comprises 568 residues: Estrogen receptor beta-1 (568 aa).

Residues 12-169 are modulating; the sequence is SEYAEGDSSL…SLRGKADMHY (158 aa). 2 NR C4-type zinc fingers span residues 170–190 and 206–230; these read CAVCSDYASGYHYGVWSCEGC and CPATNQCTIDKNRRKSCQACRLRKC. Positions 170 to 235 form a DNA-binding region, nuclear receptor; that stretch reads CAVCSDYASG…RLRKCYEVGM (66 aa). The NR LBD domain maps to 292-528; sequence SPEELIARIM…DLLLEMLDAH (237 aa).

It belongs to the nuclear hormone receptor family. NR3 subfamily. As to quaternary structure, binds DNA as a homodimer. Can form a heterodimer with ER-alpha.

The protein resides in the nucleus. Its function is as follows. Binds estrogens with an affinity similar to that of ER-alpha, and activates expression of reporter genes containing estrogen response elements (ERE) in an estrogen-dependent manner. This Carassius auratus (Goldfish) protein is Estrogen receptor beta-1 (esr2a).